A 523-amino-acid polypeptide reads, in one-letter code: Excitatory amino acid transporter 3 (523 aa).

Over 1-18 (MGKPTSSGCDWRRFLRNH) the chain is Cytoplasmic. A helical transmembrane segment spans residues 19–38 (WLLLSTVAAVVLGIVLGVVV). Topologically, residues 39 to 61 (RGHSELSNLDKFYFAFPGEILMR) are extracellular. The helical transmembrane segment at 62 to 82 (MLKLVILPLIVSSMITGVAAL) threads the bilayer. At 83-93 (DSNVSGKIGLR) the chain is on the cytoplasmic side. Residues 94–114 (AVVYYFSTTVIAVILGIVLVV) traverse the membrane as a helical segment. The Na(+) site is built by Tyr98, Thr101, and Thr102. Residues 115 to 204 (SIKPGVTQKV…KTKEYKIVGL (90 aa)) are Extracellular-facing. 3 N-linked (GlcNAc...) asparagine glycosylation sites follow: Asn128, Asn178, and Asn194. A helical membrane pass occupies residues 205 to 228 (YSDGINVLGLIIFCLVFGLVIGKM). The Cytoplasmic portion of the chain corresponds to 229 to 237 (GEKGQILVD). Residues 238–265 (FFNALSDATMKIVQIIMCYMPIGILFLI) traverse the membrane as a helical segment. Over 266–285 (AGKIIEVEDWEIFRKLGLYM) the chain is Extracellular. Residues 286–307 (ATVLSGLAIHSLIVLPLLYFIV) form a helical membrane-spanning segment. At 308–312 (VRKNP) the chain is on the cytoplasmic side. An intramembrane region (discontinuously helical) is located at residues 313–343 (FRFALGMAQALLTALMISSSSATLPVTFRCA). L-aspartate-binding residues include Ser330 and Ser332. At 344 to 352 (EEKNQVDKR) the chain is on the cytoplasmic side. A helical transmembrane segment spans residues 353 to 379 (ITRFVLPVGATINMDGTALYEAVAAVF). Na(+) contacts are provided by Gly361, Thr363, Asn365, and Asp367. Thr369 is a binding site for L-aspartate. The Extracellular portion of the chain corresponds to 380–392 (IAQLNGLDLSIGQ). The segment at residues 393-426 (IVTISITATAASIGAAGVPQAGLVTMVIVLSAVG) is an intramembrane region (discontinuously helical). Na(+) contacts are provided by Ser404, Ile405, and Ala407. L-aspartate is bound at residue Val410. Topologically, residues 427-439 (LPAEDVTLIIAVD) are extracellular. The helical transmembrane segment at 440 to 461 (WLLDRFRTMVNVLGDAFGTGIV) threads the bilayer. L-aspartate-binding residues include Arg446, Thr447, and Asn450. Na(+) contacts are provided by Asn450 and Asp454. Over 462–523 (EKLSKKELEQ…TISFTQTSQF (62 aa)) the chain is Cytoplasmic. 2 positions are modified to phosphoserine: Ser516 and Ser521.

Belongs to the dicarboxylate/amino acid:cation symporter (DAACS) (TC 2.A.23) family. SLC1A1 subfamily. As to quaternary structure, homotrimer. Interacts with ARL6IP5. Interacts with RTN2 (via N-terminus); the interaction promotes cell surface expression of SLC1A1. Interacts with SORCS2; this interaction is important for normal expression at the cell membrane. As to expression, detected on neurons in the brain cortex, dentate gyrus and hippocampus CA2 region (at protein level). Expressed in whole brain, brain cortex, hippocampus, cerebellum, lung, kidney, small intestine and skeletal muscle. Expressed in the renal outer medulla, medullary ray and cortex (at protein level).

It is found in the cell membrane. The protein resides in the apical cell membrane. It localises to the synapse. Its subcellular location is the synaptosome. The protein localises to the early endosome membrane. It is found in the late endosome membrane. The protein resides in the recycling endosome membrane. The enzyme catalyses K(+)(in) + L-glutamate(out) + 3 Na(+)(out) + H(+)(out) = K(+)(out) + L-glutamate(in) + 3 Na(+)(in) + H(+)(in). The catalysed reaction is K(+)(in) + L-aspartate(out) + 3 Na(+)(out) + H(+)(out) = K(+)(out) + L-aspartate(in) + 3 Na(+)(in) + H(+)(in). It catalyses the reaction D-aspartate(out) + K(+)(in) + 3 Na(+)(out) + H(+)(out) = D-aspartate(in) + K(+)(out) + 3 Na(+)(in) + H(+)(in). It carries out the reaction K(+)(in) + L-cysteine(out) + 3 Na(+)(out) + H(+)(out) = K(+)(out) + L-cysteine(in) + 3 Na(+)(in) + H(+)(in). Its function is as follows. Sodium-dependent, high-affinity amino acid transporter that mediates the uptake of L-glutamate and also L-aspartate and D-aspartate. Can also transport L-cysteine. Functions as a symporter that transports one amino acid molecule together with two or three Na(+) ions and one proton, in parallel with the counter-transport of one K(+) ion. Mediates Cl(-) flux that is not coupled to amino acid transport; this avoids the accumulation of negative charges due to aspartate and Na(+) symport. Plays an important role in L-glutamate and L-aspartate reabsorption in renal tubuli. Plays a redundant role in the rapid removal of released glutamate from the synaptic cleft, which is essential for terminating the postsynaptic action of glutamate. Contributes to glutathione biosynthesis and protection against oxidative stress via its role in L-glutamate and L-cysteine transport. Negatively regulated by ARL6IP5. The sequence is that of Excitatory amino acid transporter 3 (Slc1a1) from Mus musculus (Mouse).